The chain runs to 526 residues: MTISNLLKQRVRYAPYLKKVKEAHELIPLFKNGQYLGWSGFTGVGTPKAVPEALIDHVEKNNLQGKLRFNLFVGASAGPEENRWAEHDMIIKRAPHQVGKPIAKAINQGRIEFFDKHLSMFPQDLTYGFYTRERKDNKILDYTIIEATAIKEDGSIVPGPSVGGSPEFITVSDKVIIEVNTATPSFEGIHDIDMPVNPPFRKPYPYLKVDDKCGVDSIPVDPEKVVAIVESTMRDQVPPNTPSDDMSRAIAGHLVEFFRNEVKHGRLPENLLPLQSGIGNIANAVIEGLAGAQFKHLTVWTEVLQDSFLDLFENGSLDYATATSVRLTEKGFDRAFANWENFKHRLCLRSQVVSNNPEMIRRLGVIAMNTPVEVDIYAHANSTNVNGSRMLNGLGGSADFLRNAKLSIMHAPSARPTKVDPTGISTIVPMASHVDQTEHDLDILVTDQGLADLRGLSPKERAREIINKCAHPDYQALLTDYLDRAEHYAKKHNCLHEPHMLKNAFKFHTNLAEKGTMKVDSWEPVD.

Threonine 2 is modified (N-acetylthreonine). A CoA-binding site is contributed by 277–281; that stretch reads GIGNI. Glutamate 302 serves as the catalytic 5-glutamyl coenzyme A thioester intermediate. A Phosphoserine modification is found at serine 350. CoA is bound by residues asparagine 392 and glycine 396.

The protein belongs to the acetyl-CoA hydrolase/transferase family. As to quaternary structure, monomer. Post-translationally, glycosylated; contains mannose.

It is found in the cytoplasm. It catalyses the reaction acetyl-CoA + H2O = acetate + CoA + H(+). In terms of biological role, presumably involved in regulating the intracellular acetyl-CoA pool for fatty acid and cholesterol synthesis and fatty acid oxidation. It may be involved in overall regulation of acetylation during melatonin synthesis. The polypeptide is Acetyl-CoA hydrolase (ACH1) (Saccharomyces cerevisiae (strain ATCC 204508 / S288c) (Baker's yeast)).